The sequence spans 290 residues: Probable branched-chain-amino-acid aminotransferase (290 aa).

Lys-155 is modified (N6-(pyridoxal phosphate)lysine).

Belongs to the class-IV pyridoxal-phosphate-dependent aminotransferase family. Pyridoxal 5'-phosphate is required as a cofactor.

It carries out the reaction L-leucine + 2-oxoglutarate = 4-methyl-2-oxopentanoate + L-glutamate. The catalysed reaction is L-isoleucine + 2-oxoglutarate = (S)-3-methyl-2-oxopentanoate + L-glutamate. The enzyme catalyses L-valine + 2-oxoglutarate = 3-methyl-2-oxobutanoate + L-glutamate. It participates in amino-acid biosynthesis; L-isoleucine biosynthesis; L-isoleucine from 2-oxobutanoate: step 4/4. The protein operates within amino-acid biosynthesis; L-leucine biosynthesis; L-leucine from 3-methyl-2-oxobutanoate: step 4/4. It functions in the pathway amino-acid biosynthesis; L-valine biosynthesis; L-valine from pyruvate: step 4/4. Its function is as follows. Acts on leucine, isoleucine and valine. The chain is Probable branched-chain-amino-acid aminotransferase (ilvE) from Rickettsia felis (strain ATCC VR-1525 / URRWXCal2) (Rickettsia azadi).